Reading from the N-terminus, the 254-residue chain is UPF0246 protein FTN_1542 (254 aa).

The protein belongs to the UPF0246 family.

This is UPF0246 protein FTN_1542 from Francisella tularensis subsp. novicida (strain U112).